Reading from the N-terminus, the 329-residue chain is Serine dehydratase-like (329 aa).

Met-1 is modified (N-acetylmethionine). N6-(pyridoxal phosphate)lysine is present on Lys-48.

The protein belongs to the serine/threonine dehydratase family. As to quaternary structure, monomer. Homodimer. Pyridoxal 5'-phosphate is required as a cofactor.

It catalyses the reaction L-serine = pyruvate + NH4(+). The enzyme catalyses L-threonine = 2-oxobutanoate + NH4(+). It carries out the reaction L-glutamate = D-glutamate. With respect to regulation, serine dehydratase activity is inhibited by manganese chloride, ferrous chloride, cobalt chloride, cupric chloride, nickel chloride and zinc chloride. Glutamate racemase activity is inhibited by manganese chloride, ferrous chloride, cupric chloride and zinc chloride. Catalyzes the pyridoxal-phosphate-dependent dehydrative deamination of L-threonine and L-serine to ammonia and alpha-ketobutyrate and pyruvate, respectively. Also exhibits racemase activity towards L-glutamate and D-glutamate. The polypeptide is Serine dehydratase-like (Sdsl) (Rattus norvegicus (Rat)).